The chain runs to 423 residues: Protein phosphatase 2C 77 (423 aa).

Residues 74-95 are disordered; it reads GDEINGSDEFDPRSMNQSEKKV. In terms of domain architecture, PPM-type phosphatase spans 112 to 411; the sequence is LYGVTSICGR…DNISVVVVDL (300 aa). Mg(2+) is bound by residues D165, D251, and S252. A disulfide bridge links C257 with C331. D337 and D402 together coordinate Mg(2+).

This sequence belongs to the PP2C family. Interacts with SPK1, CIPK15/PKS3, GPX3, SCAR1, SCAR2, SCAR3 and SCARL. Also interacts with CIPK24/SOS2. Binds to the fibrillin precursor protein. Interacts with ABA-bounded PYR1, PYL1, PYL2, PYL3, PYL4, PYL5, PYL6, PYL8 and PYL9, and with free PYL2, PYL3 and PYL4. Interacts with and represses GHR1, and, to a lesser extent, SRK2E/OST1. It depends on Mg(2+) as a cofactor. Mn(2+) is required as a cofactor.

It catalyses the reaction O-phospho-L-seryl-[protein] + H2O = L-seryl-[protein] + phosphate. It carries out the reaction O-phospho-L-threonyl-[protein] + H2O = L-threonyl-[protein] + phosphate. Its activity is regulated as follows. Phosphatase activity repressed by oxidized ATGPX3, free fatty acids (e.g. arachidonic acid (20:4) and Linolenic acid (18:3)) and by H(2)O(2). Repressed by PYR/PYL/RCAR ABA receptors in an ABA-dependent manner. Its function is as follows. Repressor of the abscisic acid (ABA) signaling pathway that regulates numerous ABA responses, such as stomatal closure, osmotic water permeability of the plasma membrane (Pos), high light stress, response to glucose, seed germination and inhibition of vegetative growth. During the stomatal closure regulation, modulates the inward calcium-channel permeability as well as H(2)O(2) and oxidative burst in response to ABA and dehydration. Represses GHR1 and, to some extent, SRK2E/OST1, kinases involved in the regulation of SLAC1-dependent stomatal closure. Controls negatively fibrillin that is involved in mediating ABA-induced photoprotection. May be implicated in ABA content regulation. Involved in acquired thermotolerance of root growth and seedling survival. Required for the Erwinia amylovora harpin-induced (HrpN) drought tolerance. Involved in the hydrotropic response. The chain is Protein phosphatase 2C 77 from Arabidopsis thaliana (Mouse-ear cress).